The sequence spans 300 residues: Ribosomal protein L11 methyltransferase (300 aa).

Thr-152, Gly-173, Asp-195, and Asn-234 together coordinate S-adenosyl-L-methionine.

Belongs to the methyltransferase superfamily. PrmA family.

It is found in the cytoplasm. It catalyses the reaction L-lysyl-[protein] + 3 S-adenosyl-L-methionine = N(6),N(6),N(6)-trimethyl-L-lysyl-[protein] + 3 S-adenosyl-L-homocysteine + 3 H(+). In terms of biological role, methylates ribosomal protein L11. This is Ribosomal protein L11 methyltransferase from Burkholderia vietnamiensis (strain G4 / LMG 22486) (Burkholderia cepacia (strain R1808)).